Reading from the N-terminus, the 274-residue chain is NH(3)-dependent NAD(+) synthetase (274 aa).

G46–S53 lines the ATP pocket. Residue D52 coordinates Mg(2+). Deamido-NAD(+) is bound at residue R140. Residue T160 coordinates ATP. Residue E165 coordinates Mg(2+). Deamido-NAD(+) is bound by residues K173 and D180. K189 and T211 together coordinate ATP. H260–K261 lines the deamido-NAD(+) pocket.

Belongs to the NAD synthetase family. In terms of assembly, homodimer.

The catalysed reaction is deamido-NAD(+) + NH4(+) + ATP = AMP + diphosphate + NAD(+) + H(+). It participates in cofactor biosynthesis; NAD(+) biosynthesis; NAD(+) from deamido-NAD(+) (ammonia route): step 1/1. In terms of biological role, catalyzes the ATP-dependent amidation of deamido-NAD to form NAD. Uses ammonia as a nitrogen source. The chain is NH(3)-dependent NAD(+) synthetase from Streptococcus pyogenes serotype M18 (strain MGAS8232).